The sequence spans 113 residues: Large ribosomal subunit protein uL22 (113 aa).

Belongs to the universal ribosomal protein uL22 family. Part of the 50S ribosomal subunit.

This protein binds specifically to 23S rRNA; its binding is stimulated by other ribosomal proteins, e.g. L4, L17, and L20. It is important during the early stages of 50S assembly. It makes multiple contacts with different domains of the 23S rRNA in the assembled 50S subunit and ribosome. Its function is as follows. The globular domain of the protein is located near the polypeptide exit tunnel on the outside of the subunit, while an extended beta-hairpin is found that lines the wall of the exit tunnel in the center of the 70S ribosome. The chain is Large ribosomal subunit protein uL22 from Xanthomonas oryzae pv. oryzae (strain MAFF 311018).